The sequence spans 92 residues: Putative lambdoid prophage defective integrase (92 aa).

This sequence belongs to the 'phage' integrase family.

In Escherichia coli O157:H7, this protein is Putative lambdoid prophage defective integrase (intG).